Consider the following 241-residue polypeptide: UDP-2,3-diacylglucosamine hydrolase (241 aa).

The Mn(2+) site is built by D8, H10, D41, N78, and H113. Residue 78 to 79 (NR) coordinates substrate. D121, S159, N163, K166, and H194 together coordinate substrate. 2 residues coordinate Mn(2+): H194 and H196.

It belongs to the LpxH family. Mn(2+) is required as a cofactor.

It localises to the cell inner membrane. It catalyses the reaction UDP-2-N,3-O-bis[(3R)-3-hydroxytetradecanoyl]-alpha-D-glucosamine + H2O = 2-N,3-O-bis[(3R)-3-hydroxytetradecanoyl]-alpha-D-glucosaminyl 1-phosphate + UMP + 2 H(+). Its pathway is glycolipid biosynthesis; lipid IV(A) biosynthesis; lipid IV(A) from (3R)-3-hydroxytetradecanoyl-[acyl-carrier-protein] and UDP-N-acetyl-alpha-D-glucosamine: step 4/6. Functionally, hydrolyzes the pyrophosphate bond of UDP-2,3-diacylglucosamine to yield 2,3-diacylglucosamine 1-phosphate (lipid X) and UMP by catalyzing the attack of water at the alpha-P atom. Involved in the biosynthesis of lipid A, a phosphorylated glycolipid that anchors the lipopolysaccharide to the outer membrane of the cell. The protein is UDP-2,3-diacylglucosamine hydrolase of Shewanella putrefaciens (strain CN-32 / ATCC BAA-453).